Reading from the N-terminus, the 58-residue chain is Small ribosomal subunit protein bS21 (58 aa).

The tract at residues 34–58 (KREHYESPSVRRKKKSEAARRRKRR) is disordered. A compositionally biased stretch (basic residues) spans 43–58 (VRRKKKSEAARRRKRR).

It belongs to the bacterial ribosomal protein bS21 family.

This is Small ribosomal subunit protein bS21 from Caldicellulosiruptor bescii (strain ATCC BAA-1888 / DSM 6725 / KCTC 15123 / Z-1320) (Anaerocellum thermophilum).